Consider the following 261-residue polypeptide: Methionine aminopeptidase (261 aa).

Histidine 78 contacts substrate. A divalent metal cation-binding residues include aspartate 96, aspartate 107, and histidine 170. Histidine 177 provides a ligand contact to substrate. Residues glutamate 202 and glutamate 233 each contribute to the a divalent metal cation site.

Belongs to the peptidase M24A family. Methionine aminopeptidase type 1 subfamily. In terms of assembly, monomer. The cofactor is Co(2+). Zn(2+) serves as cofactor. It depends on Mn(2+) as a cofactor. Fe(2+) is required as a cofactor.

It catalyses the reaction Release of N-terminal amino acids, preferentially methionine, from peptides and arylamides.. In terms of biological role, removes the N-terminal methionine from nascent proteins. The N-terminal methionine is often cleaved when the second residue in the primary sequence is small and uncharged (Met-Ala-, Cys, Gly, Pro, Ser, Thr, or Val). Requires deformylation of the N(alpha)-formylated initiator methionine before it can be hydrolyzed. The chain is Methionine aminopeptidase from Buchnera aphidicola subsp. Schizaphis graminum (strain Sg).